The following is a 218-amino-acid chain: Octanoyltransferase (218 aa).

The BPL/LPL catalytic domain occupies 32–218 (GDAPEAVWLL…LRTFSRSFPD (187 aa)). Residues 71 to 78 (RGGQYTYH), 151 to 153 (AIG), and 164 to 166 (GLS) contribute to the substrate site. The active-site Acyl-thioester intermediate is cysteine 182.

It belongs to the LipB family.

The protein localises to the cytoplasm. The enzyme catalyses octanoyl-[ACP] + L-lysyl-[protein] = N(6)-octanoyl-L-lysyl-[protein] + holo-[ACP] + H(+). The protein operates within protein modification; protein lipoylation via endogenous pathway; protein N(6)-(lipoyl)lysine from octanoyl-[acyl-carrier-protein]: step 1/2. In terms of biological role, catalyzes the transfer of endogenously produced octanoic acid from octanoyl-acyl-carrier-protein onto the lipoyl domains of lipoate-dependent enzymes. Lipoyl-ACP can also act as a substrate although octanoyl-ACP is likely to be the physiological substrate. The polypeptide is Octanoyltransferase (Cereibacter sphaeroides (strain ATCC 17025 / ATH 2.4.3) (Rhodobacter sphaeroides)).